We begin with the raw amino-acid sequence, 357 residues long: Mannonate dehydratase (357 aa).

This sequence belongs to the mannonate dehydratase family. Fe(2+) is required as a cofactor. Requires Mn(2+) as cofactor.

The enzyme catalyses D-mannonate = 2-dehydro-3-deoxy-D-gluconate + H2O. It functions in the pathway carbohydrate metabolism; pentose and glucuronate interconversion. In terms of biological role, catalyzes the dehydration of D-mannonate. This is Mannonate dehydratase from Enterococcus faecalis (strain ATCC 700802 / V583).